A 181-amino-acid polypeptide reads, in one-letter code: uncharacterized protein (181 aa).

The Nudix hydrolase domain maps to 35-175 (LRHRCVFVWA…ARLRAWRGAS (141 aa)). A Nudix box motif is present at residues 72–94 (GGVVGAGESYDDAALREAEEELG). 2 residues coordinate Mg(2+): Glu88 and Glu92.

It belongs to the Nudix hydrolase family. Mg(2+) serves as cofactor.

This is an uncharacterized protein from Streptomyces coelicolor (strain ATCC BAA-471 / A3(2) / M145).